Reading from the N-terminus, the 514-residue chain is Putative selenium-binding protein (514 aa).

The protein belongs to the selenium-binding protein family.

In Caenorhabditis briggsae, this protein is Putative selenium-binding protein.